Here is an 83-residue protein sequence, read N- to C-terminus: Exodeoxyribonuclease 7 small subunit (83 aa).

Residues 63–83 (VQNDDGTTGTEPLADTGESGR) form a disordered region.

This sequence belongs to the XseB family. Heterooligomer composed of large and small subunits.

It is found in the cytoplasm. The catalysed reaction is Exonucleolytic cleavage in either 5'- to 3'- or 3'- to 5'-direction to yield nucleoside 5'-phosphates.. In terms of biological role, bidirectionally degrades single-stranded DNA into large acid-insoluble oligonucleotides, which are then degraded further into small acid-soluble oligonucleotides. This is Exodeoxyribonuclease 7 small subunit from Gluconobacter oxydans (strain 621H) (Gluconobacter suboxydans).